The chain runs to 324 residues: Glutathione synthetase (324 aa).

One can recognise an ATP-grasp domain in the interval Lys-129–Val-313. Position 155–211 (Val-155–Gly-211) interacts with ATP. Mg(2+) contacts are provided by Glu-284 and Asn-286.

The protein belongs to the prokaryotic GSH synthase family. Mg(2+) is required as a cofactor. The cofactor is Mn(2+).

It catalyses the reaction gamma-L-glutamyl-L-cysteine + glycine + ATP = glutathione + ADP + phosphate + H(+). It participates in sulfur metabolism; glutathione biosynthesis; glutathione from L-cysteine and L-glutamate: step 2/2. In Gloeobacter violaceus (strain ATCC 29082 / PCC 7421), this protein is Glutathione synthetase.